The chain runs to 387 residues: 1-deoxy-D-xylulose 5-phosphate reductoisomerase (387 aa).

NADPH contacts are provided by T10, G11, S12, V13, N38, and N119. A 1-deoxy-D-xylulose 5-phosphate-binding site is contributed by K120. E121 contributes to the NADPH binding site. Residue D145 participates in Mn(2+) binding. 4 residues coordinate 1-deoxy-D-xylulose 5-phosphate: S146, E147, S170, and H193. E147 is a binding site for Mn(2+). Residue G199 coordinates NADPH. The 1-deoxy-D-xylulose 5-phosphate site is built by S206, N211, K212, and E215. E215 contributes to the Mn(2+) binding site.

It belongs to the DXR family. Mg(2+) serves as cofactor. It depends on Mn(2+) as a cofactor.

It carries out the reaction 2-C-methyl-D-erythritol 4-phosphate + NADP(+) = 1-deoxy-D-xylulose 5-phosphate + NADPH + H(+). The protein operates within isoprenoid biosynthesis; isopentenyl diphosphate biosynthesis via DXP pathway; isopentenyl diphosphate from 1-deoxy-D-xylulose 5-phosphate: step 1/6. Catalyzes the NADPH-dependent rearrangement and reduction of 1-deoxy-D-xylulose-5-phosphate (DXP) to 2-C-methyl-D-erythritol 4-phosphate (MEP). The chain is 1-deoxy-D-xylulose 5-phosphate reductoisomerase from Wolbachia sp. subsp. Drosophila simulans (strain wRi).